Reading from the N-terminus, the 263-residue chain is Thymidylate synthase (263 aa).

Residues Arg25 and Arg123–Arg124 each bind dUMP. The Nucleophile role is filled by Cys143. DUMP is bound by residues Arg163–Asp166, Asn174, and His204–Tyr206. Asp166 lines the (6R)-5,10-methylene-5,6,7,8-tetrahydrofolate pocket. Residue Ser262 coordinates (6R)-5,10-methylene-5,6,7,8-tetrahydrofolate.

The protein belongs to the thymidylate synthase family. Bacterial-type ThyA subfamily. Homodimer.

Its subcellular location is the cytoplasm. The catalysed reaction is dUMP + (6R)-5,10-methylene-5,6,7,8-tetrahydrofolate = 7,8-dihydrofolate + dTMP. The protein operates within pyrimidine metabolism; dTTP biosynthesis. Its function is as follows. Catalyzes the reductive methylation of 2'-deoxyuridine-5'-monophosphate (dUMP) to 2'-deoxythymidine-5'-monophosphate (dTMP) while utilizing 5,10-methylenetetrahydrofolate (mTHF) as the methyl donor and reductant in the reaction, yielding dihydrofolate (DHF) as a by-product. This enzymatic reaction provides an intracellular de novo source of dTMP, an essential precursor for DNA biosynthesis. In Clostridium beijerinckii (strain ATCC 51743 / NCIMB 8052) (Clostridium acetobutylicum), this protein is Thymidylate synthase.